The following is a 451-amino-acid chain: Eukaryotic translation initiation factor 3 subunit E (451 aa).

In terms of domain architecture, PCI spans 245 to 425 (PFFNHEPARD…GTVVMNHPPS (181 aa)).

The protein belongs to the eIF-3 subunit E family. Component of the eukaryotic translation initiation factor 3 (eIF-3) complex.

The protein resides in the cytoplasm. In terms of biological role, component of the eukaryotic translation initiation factor 3 (eIF-3) complex, which is involved in protein synthesis of a specialized repertoire of mRNAs and, together with other initiation factors, stimulates binding of mRNA and methionyl-tRNAi to the 40S ribosome. The eIF-3 complex specifically targets and initiates translation of a subset of mRNAs involved in cell proliferation. This chain is Eukaryotic translation initiation factor 3 subunit E (int6), found in Sclerotinia sclerotiorum (strain ATCC 18683 / 1980 / Ss-1) (White mold).